The sequence spans 103 residues: Small ribosomal subunit protein uS10 (103 aa).

This sequence belongs to the universal ribosomal protein uS10 family. Part of the 30S ribosomal subunit.

Its function is as follows. Involved in the binding of tRNA to the ribosomes. This is Small ribosomal subunit protein uS10 from Nitratiruptor sp. (strain SB155-2).